A 319-amino-acid chain; its full sequence is ATP-dependent 6-phosphofructokinase (319 aa).

Position 11 (Gly-11) interacts with ATP. 21 to 25 (RAVVR) serves as a coordination point for ADP. Residues 72–73 (RY) and 102–105 (GDGS) contribute to the ATP site. Asp-103 contributes to the Mg(2+) binding site. Residue 125–127 (TID) coordinates substrate. Catalysis depends on Asp-127, which acts as the Proton acceptor. ADP is bound at residue Arg-154. Substrate-binding positions include Arg-162 and 169 to 171 (MGR). ADP contacts are provided by residues 185–187 (GAE), Arg-211, and 213–215 (KKH). Substrate-binding positions include Glu-222, Arg-243, and 249 to 252 (HVQR).

This sequence belongs to the phosphofructokinase type A (PFKA) family. ATP-dependent PFK group I subfamily. Prokaryotic clade 'B1' sub-subfamily. In terms of assembly, homotetramer. Requires Mg(2+) as cofactor.

The protein localises to the cytoplasm. The enzyme catalyses beta-D-fructose 6-phosphate + ATP = beta-D-fructose 1,6-bisphosphate + ADP + H(+). Its pathway is carbohydrate degradation; glycolysis; D-glyceraldehyde 3-phosphate and glycerone phosphate from D-glucose: step 3/4. Its activity is regulated as follows. Allosterically activated by ADP and other diphosphonucleosides, and allosterically inhibited by phosphoenolpyruvate. Catalyzes the phosphorylation of D-fructose 6-phosphate to fructose 1,6-bisphosphate by ATP, the first committing step of glycolysis. This chain is ATP-dependent 6-phosphofructokinase, found in Listeria innocua serovar 6a (strain ATCC BAA-680 / CLIP 11262).